Here is a 1374-residue protein sequence, read N- to C-terminus: F-actin-uncapping protein LRRC16A (1374 aa).

Met1 is modified (N-acetylmethionine). Ser122 bears the Phosphoserine mark. LRR repeat units follow at residues Ser245–Ala269, Asn275–Ile298, Pro304–Gln327, Ala336–Gln363, Leu391–Gln418, Ser423–Gly447, Ile485–Ser510, Asp547–Ala570, Asn574–Lys597, and Leu658–Leu682. Positions Gly714 to Leu738 form a coiled coil. At Thr920 the chain carries Phosphothreonine. Disordered regions lie at residues Pro961–Glu982 and Lys1040–Val1374. One copy of the LRR 11 repeat lies at Phe962–Arg985. The interval Phe962–Arg1084 is inhibits capping activity of CP. Ser972 is subject to Phosphoserine. Over residues Lys1040–Lys1064 the composition is skewed to basic and acidic residues. The necessary for localization at the cell membrane stretch occupies residues Glu1058 to Glu1092. Ser1096 is subject to Phosphoserine. Basic and acidic residues-rich tracts occupy residues Thr1108–Glu1132 and Glu1141–Ser1150. Polar residues predominate over residues Val1191 to Thr1204. Position 1229 is a phosphothreonine (Thr1229). Residues Lys1232–Cys1244 are compositionally biased toward basic and acidic residues. The span at Arg1245–Pro1263 shows a compositional bias: low complexity. Phosphoserine occurs at positions 1281, 1289, 1291, 1295, 1319, 1328, and 1335. Positions Gln1317 to Glu1330 are enriched in low complexity. Positions Gln1343 to Gln1356 are enriched in basic and acidic residues. Ser1363 carries the phosphoserine modification.

Belongs to the CARMIL family. In terms of assembly, homodimer. Interacts (via C-terminus) with heterodimeric capping protein (CP); this interaction uncaps barbed ends capped by CP, enhances barbed-end actin polymerization and promotes lamellipodial formation and cell migration. Interacts with MYO1E. Interacts with TRIO.

It is found in the cytoplasm. It localises to the cytoskeleton. The protein localises to the cell membrane. Its subcellular location is the cell projection. The protein resides in the lamellipodium. Cell membrane-cytoskeleton-associated protein that plays a role in the regulation of actin polymerization at the barbed end of actin filaments. Prevents F-actin heterodimeric capping protein (CP) activity at the leading edges of migrating cells, and hence generates uncapped barbed ends and enhances actin polymerization, however, seems unable to nucleate filaments. Plays a role in lamellipodial protrusion formations and cell migration. The chain is F-actin-uncapping protein LRRC16A from Mus musculus (Mouse).